The sequence spans 425 residues: 3-isopropylmalate dehydratase large subunit (425 aa).

3 residues coordinate [4Fe-4S] cluster: cysteine 305, cysteine 365, and cysteine 368.

Belongs to the aconitase/IPM isomerase family. LeuC type 2 subfamily. Heterodimer of LeuC and LeuD. [4Fe-4S] cluster is required as a cofactor.

The catalysed reaction is (2R,3S)-3-isopropylmalate = (2S)-2-isopropylmalate. Its pathway is amino-acid biosynthesis; L-leucine biosynthesis; L-leucine from 3-methyl-2-oxobutanoate: step 2/4. In terms of biological role, catalyzes the isomerization between 2-isopropylmalate and 3-isopropylmalate, via the formation of 2-isopropylmaleate. The protein is 3-isopropylmalate dehydratase large subunit of Clostridioides difficile (strain 630) (Peptoclostridium difficile).